Reading from the N-terminus, the 192-residue chain is Pyridoxal 5'-phosphate synthase subunit PdxT (192 aa).

53–55 (GES) lines the L-glutamine pocket. Cysteine 85 serves as the catalytic Nucleophile. L-glutamine contacts are provided by residues arginine 112 and 140 to 141 (IR). Residues histidine 176 and glutamate 178 each act as charge relay system in the active site.

The protein belongs to the glutaminase PdxT/SNO family. As to quaternary structure, in the presence of PdxS, forms a dodecamer of heterodimers. Only shows activity in the heterodimer.

The enzyme catalyses aldehydo-D-ribose 5-phosphate + D-glyceraldehyde 3-phosphate + L-glutamine = pyridoxal 5'-phosphate + L-glutamate + phosphate + 3 H2O + H(+). The catalysed reaction is L-glutamine + H2O = L-glutamate + NH4(+). It participates in cofactor biosynthesis; pyridoxal 5'-phosphate biosynthesis. Its function is as follows. Catalyzes the hydrolysis of glutamine to glutamate and ammonia as part of the biosynthesis of pyridoxal 5'-phosphate. The resulting ammonia molecule is channeled to the active site of PdxS. In Natronomonas pharaonis (strain ATCC 35678 / DSM 2160 / CIP 103997 / JCM 8858 / NBRC 14720 / NCIMB 2260 / Gabara) (Halobacterium pharaonis), this protein is Pyridoxal 5'-phosphate synthase subunit PdxT.